Consider the following 343-residue polypeptide: MSTYQAATIVAAPNEFRVPFPPFVQISKVQFQREAGSRLLAASGWDGTCRVYEVGKLGDISEKLVFTHGKPLLTCTFAGYNKVAFGGVDHNVKLADIETGNGTQLGSHALAVRCMEFNPMSSLIVSGGWDSSVKLWDARSYGNGAIESVNVSSSVYAMDVLKHTILVGTKDRKIFMYDSRKLREPLQVRDSPLKYQTRAVQFFPTGEAFVVSSIEGRVAVEYVDQSGEEMMKRKYAFKCHREKDTDGTELIHPVHTVAFHPKYGTFATGGADGIVNIWDPFNRKRIIQLHKFETSISSLSFNEDGSQLAIATSYQYEKEIDPSPLPNNSITIRHITDPESRPK.

7 WD repeats span residues 21–62, 67–105, 107–146, 150–187, 192–232, 249–288, and 291–331; these read PPFV…DISE, THGKPLLTCTFAGYNKVAFGGVDHNVKLADIETGNGTQL, SHALAVRCMEFNPMSSLIVSGGWDSSVKLWDARSYGNGAI, NVSSSVYAMDVLKHTILVGTKDRKIFMYDSRKLREPLQ, PLKY…EMMK, ELIHPVHTVAFHPKYGTFATGGADGIVNIWDPFNRKRIIQ, and KFET…NSIT. Residues 322–343 are disordered; the sequence is PSPLPNNSITIRHITDPESRPK. Over residues 334–343 the composition is skewed to basic and acidic residues; that stretch reads HITDPESRPK.

It belongs to the WD repeat BUB3 family. In terms of assembly, may interact with bub-1; for localization at the kinetochore and the onset of anaphase.

Its subcellular location is the chromosome. It is found in the centromere. The protein resides in the kinetochore. The protein localises to the nucleus. Has a dual function in spindle-assembly checkpoint signaling and in promoting the establishment of correct kinetochore-microtubule (K-MT) attachments. Promotes the formation of stable end-on bipolar attachments of chromosomes. Necessary for expression and kinetochore localization of bub-1. Plays a role in synapsis checkpoint signaling inducing apoptosis in response to unsynapsed chromosomes and thus controlling chromosomal segregation during oocyte meiosis. This Caenorhabditis elegans protein is Mitotic checkpoint protein bub-3.